The chain runs to 132 residues: Large ribosomal subunit protein bL17 (132 aa).

This sequence belongs to the bacterial ribosomal protein bL17 family. As to quaternary structure, part of the 50S ribosomal subunit. Contacts protein L32.

The protein is Large ribosomal subunit protein bL17 of Variovorax paradoxus (strain S110).